Here is a 509-residue protein sequence, read N- to C-terminus: Maturase K (509 aa).

The protein belongs to the intron maturase 2 family. MatK subfamily.

Its subcellular location is the plastid. The protein localises to the chloroplast. In terms of biological role, usually encoded in the trnK tRNA gene intron. Probably assists in splicing its own and other chloroplast group II introns. The sequence is that of Maturase K from Vatairea macrocarpa.